The following is a 406-amino-acid chain: Prisilkin-39 (406 aa).

Residues 1–19 (MKGFLTLLLVCAILSTGYC) form the signal peptide. Transmembrane regions (helical) follow at residues 26–48 (ALTGLVAGATIGALASGGLGAGA) and 58–80 (VGVGAVGIPVAVGGGIPYGYGGY). The interval 78–197 (GGYSGYGYGY…YSGYSYGYPT (120 aa)) is 10 X 12 AA tandem repeat of G-G-Y-[SG]-G-Y-[GS]-Y-G-Y-P-[AT].

Expression is confined to the prism and organic layers of the shell with no expression detected in the nacreous shell layer. Also expressed in the mantle edge, extrapallial fluid, hemolymph and, to a lesser extent, in the viscus (at protein level). In the mantle, localizes to inner epithelial cells of the outer fold and the outer epithelial cells of the middle fold at the bottom of the periostracal groove.

It localises to the membrane. In terms of biological role, binds chitin and may serve as a framework constituent participating in shell formation. Inhibits aragonite precipitation and may regulate aragonite growth during shell layer formation. Does not affect calcite crystallization. The chain is Prisilkin-39 from Pinctada fucata (Akoya pearl oyster).